A 451-amino-acid polypeptide reads, in one-letter code: UPF0210 protein CLH_1879 (451 aa).

Belongs to the UPF0210 family. In terms of assembly, homodimer.

The chain is UPF0210 protein CLH_1879 from Clostridium botulinum (strain Alaska E43 / Type E3).